Reading from the N-terminus, the 204-residue chain is UPF0056 membrane protein TC_0241 (204 aa).

6 helical membrane-spanning segments follow: residues 8–28, 46–66, 68–88, 107–127, 138–158, and 176–196; these read LTLL…FVAL, IFAL…FRLL, VSLP…AINM, IFYP…STLG, LVLG…FFSS, and FGIS…STAF.

The protein belongs to the UPF0056 (MarC) family.

The protein resides in the cell membrane. This Chlamydia muridarum (strain MoPn / Nigg) protein is UPF0056 membrane protein TC_0241.